We begin with the raw amino-acid sequence, 1195 residues long: EST/SMG-like protein 2 (1195 aa).

Composition is skewed to polar residues over residues 1–10 (MPETSVQNPL), 18–35 (TRSM…SATP), and 55–68 (VLNP…SNSV). Disordered stretches follow at residues 1–38 (MPET…PSFP), 55–130 (VLNP…VGIT), 179–268 (SKSE…PASN), and 610–643 (DKKE…DEIM). Composition is skewed to basic and acidic residues over residues 83–109 (RFSD…EKNP) and 197–208 (INDKDNSARDQD). Composition is skewed to low complexity over residues 210–252 (NNSG…NNSD) and 619–629 (NNDSSVTESST). The PINc domain maps to 1025 to 1164 (TYFVFDATSW…LISDDDAMKK (140 aa)).

Transiently interacts with PEX14.

The protein localises to the cytoplasm. The protein resides in the nucleus. It localises to the peroxisome. In terms of biological role, may be involved in the regulation of gene expression responses of environment-sensing pathways. This chain is EST/SMG-like protein 2, found in Saccharomyces cerevisiae (strain ATCC 204508 / S288c) (Baker's yeast).